A 292-amino-acid chain; its full sequence is 4-diphosphocytidyl-2-C-methyl-D-erythritol kinase (292 aa).

Lysine 13 is an active-site residue. 97–107 is an ATP binding site; sequence PVAAGLAGGSS. Aspartate 139 is an active-site residue.

Belongs to the GHMP kinase family. IspE subfamily.

It carries out the reaction 4-CDP-2-C-methyl-D-erythritol + ATP = 4-CDP-2-C-methyl-D-erythritol 2-phosphate + ADP + H(+). The protein operates within isoprenoid biosynthesis; isopentenyl diphosphate biosynthesis via DXP pathway; isopentenyl diphosphate from 1-deoxy-D-xylulose 5-phosphate: step 3/6. Catalyzes the phosphorylation of the position 2 hydroxy group of 4-diphosphocytidyl-2C-methyl-D-erythritol. In Bacillus thuringiensis (strain Al Hakam), this protein is 4-diphosphocytidyl-2-C-methyl-D-erythritol kinase.